Here is a 292-residue protein sequence, read N- to C-terminus: uncharacterized protein (292 aa).

Lys-8 participates in a covalent cross-link: Glycyl lysine isopeptide (Lys-Gly) (interchain with G-Cter in SUMO2). The interval 47-67 (TKRKMLPSSSSRMRSDGFDEE) is disordered. A Glycyl lysine isopeptide (Lys-Gly) (interchain with G-Cter in SUMO2) cross-link involves residue Lys-76. Asn-94 carries the phosphothreonine modification. A phosphoserine mark is found at Lys-96 and Phe-97. Positions 122–292 (ETDSDQQDIT…ERSAESSEDD (171 aa)) are disordered. Phosphothreonine is present on Thr-123. Residues Ser-125 and Asp-126 each carry the phosphoserine modification. Residues 128–140 (QDITNGKKTSPQV) show a composition bias toward polar residues. The segment covering 147-173 (SRKHKKSKKSHKKKQKKRSHKKQKKSK) has biased composition (basic residues). Positions 180–194 (TADSSSEFSEETGAS) are enriched in polar residues. 2 stretches are compositionally biased toward basic residues: residues 197–215 (RKGK…KSLK) and 247–259 (KKTK…KKAH). Positions 280–292 (ATDERSAESSEDD) are enriched in basic and acidic residues.

This is an uncharacterized protein from Homo sapiens (Human).